Here is a 94-residue protein sequence, read N- to C-terminus: Selenoprotein K (94 aa).

A helical transmembrane segment spans residues 20–42; sequence LSLITDFFWGIAEFVVLFFKTLL. Residues 48–94 form a disordered region; sequence KRRSYGNSSDSRYDDGRGPPGNPPRRMGRINHLRGPSPPPMAGGUGR. Position 92 (U92) is a non-standard amino acid, selenocysteine.

This sequence belongs to the selenoprotein K family. As to quaternary structure, interacts with DERL1, DERL2, DERL3 and SELENOS. The SELENOK-SELENOS complex interacts with VCP. Interacts with ZDHHC6. In terms of processing, cleaved by CAPN2/m-calpain in resting macrophages but not in activated macrophages. Macrophage activation up-regulates expression of the calpain inhibitor CAST/calpastatin, resulting in inhibition of CAPN2 activity. Truncated SELENOK proteins produced by failed UGA/Sec decoding are ubiquitinated by the CRL2(KLHDC2) complex, which recognizes the diglycine (Gly-Gly) at the C-terminus of truncated SELENOK proteins. As to expression, highly expressed in heart.

The protein resides in the endoplasmic reticulum membrane. The protein localises to the cell membrane. Required for Ca(2+) flux in immune cells and plays a role in T-cell proliferation and in T-cell and neutrophil migration. Involved in endoplasmic reticulum-associated degradation (ERAD) of soluble glycosylated proteins. Required for palmitoylation and cell surface expression of CD36 and involved in macrophage uptake of low-density lipoprotein and in foam cell formation. Together with ZDHHC6, required for palmitoylation of ITPR1 in immune cells, leading to regulate ITPR1 stability and function. Plays a role in protection of cells from ER stress-induced apoptosis. Protects cells from oxidative stress when overexpressed in cardiomyocytes. The chain is Selenoprotein K from Homo sapiens (Human).